The following is a 553-amino-acid chain: Mucolipin-3 (553 aa).

Over 1 to 62 the chain is Cytoplasmic; it reads MANPEIVISS…FWARGRKPWK (62 aa). An interaction with phosphoinositides region spans residues 52-62; the sequence is KFWARGRKPWK. A helical membrane pass occupies residues 63–83; it reads LAIQILKIAMVTIQLVLFGLS. Residues 84–283 lie on the Extracellular side of the membrane; it reads NQMVVAFKEE…VSGSIQKNTH (200 aa). Positions 104–118 are extracellular/lumenal pore loop; the sequence is KGYIDRMDDTYAVYT. Asparagine 138 carries N-linked (GlcNAc...) asparagine glycosylation. Residues cysteine 159 and cysteine 185 are joined by a disulfide bond. The N-linked (GlcNAc...) asparagine glycan is linked to asparagine 205. Cysteine 238 and cysteine 269 are oxidised to a cystine. Residues 284–304 traverse the membrane as a helical segment; it reads NMMIFDAFVILTCLVSLILCI. Residues 305–341 lie on the Cytoplasmic side of the membrane; it reads RSVISGLQLQQEFVNFFLLHYKKDVSVSDQMEFVNGW. Residues 342–362 traverse the membrane as a helical segment; the sequence is YIMIIISDILTIIGSILKMEI. The Extracellular segment spans residues 363–371; it reads QAKSLTSYD. The helical transmembrane segment at 372–392 threads the bilayer; that stretch reads VCSILLGTSTMLVWLGVIRYL. The Cytoplasmic segment spans residues 393 to 414; that stretch reads GFFAKYNLLILTLQAALPNVIR. A helical membrane pass occupies residues 415–435; that stretch reads FCCCAAMIYLGYCFCGWIVLG. At 436-443 the chain is on the extracellular side; sequence PYHNKFRS. Residues 444-464 constitute an intramembrane region (pore-forming); it reads LNMVSECLFSLINGDDMFATF. The Selectivity filter motif lies at 456–459; the sequence is NGDD. The Extracellular portion of the chain corresponds to 465-475; sequence AKMQQKSYLVW. The chain crosses the membrane as a helical span at residues 476 to 497; sequence LFSRIYLYSFISLFIYMILSLF. Topologically, residues 498–553 are cytoplasmic; the sequence is IALITDTYETIKHYQQDGFPETELRTFISECKDLPNSGKFRLEDDPPVSLFCCCKK.

This sequence belongs to the transient receptor (TC 1.A.4) family. Polycystin subfamily. MCOLN3 sub-subfamily. In terms of assembly, homotetramer. Can heterooligomerize with MCOLN1; heteromeric assemblies have different channel properties as compared to the respective homooligomers and may be tissue-specific. May heterooligomerize with TRPV5 to form a functional distinct ion channel. Interacts with GABARAPL2. N-glycosylated.

It localises to the lysosome membrane. It is found in the early endosome membrane. Its subcellular location is the late endosome membrane. The protein resides in the cytoplasmic vesicle. The protein localises to the autophagosome membrane. It localises to the cell projection. It is found in the stereocilium membrane. It carries out the reaction Ca(2+)(in) = Ca(2+)(out). It catalyses the reaction Mg(2+)(in) = Mg(2+)(out). The catalysed reaction is K(+)(in) = K(+)(out). The enzyme catalyses Na(+)(in) = Na(+)(out). Channel activity is activated by PtdIns(3,5)P2 (phosphatidylinositol 3,5-bisphosphate). Inhibited by lumenal H(+) and Na(+). The channel pore shows dynamic behavior and undergoes spontaneous, Ca(2+)-dependent modulation when conducting Ca(2+). Its function is as follows. Nonselective cation channel probably playing a role in the regulation of membrane trafficking events. Acts as a Ca(2+)-permeable cation channel with inwardly rectifying activity. Mediates release of Ca(2+) from endosomes to the cytoplasm, contributes to endosomal acidification and is involved in the regulation of membrane trafficking and fusion in the endosomal pathway. Also permeable to Mg(2+), Na(+) and K(+). Does not seem to act as mechanosensory transduction channel in inner ear sensory hair cells. Proposed to play a critical role at the cochlear stereocilia ankle-link region during hair-bundle growth. Involved in the regulation of autophagy. Through association with GABARAPL2 may be involved in autophagosome formation possibly providing Ca(2+) for the fusion process. Through a possible and probably tissue-specific heteromerization with MCOLN1 may be at least in part involved in many lysosome-dependent cellular events. Possible heteromeric ion channel assemblies with TRPV5 show pharmacological similarity with TRPML3. This is Mucolipin-3 from Callithrix jacchus (White-tufted-ear marmoset).